Here is a 647-residue protein sequence, read N- to C-terminus: Bifunctional enzyme CysN/CysC (647 aa).

The tract at residues 1–472 is sulfate adenylyltransferase; the sequence is MSHQSDLIAT…TEERAARFGQ (472 aa). A tr-type G domain is found at 22–239; that stretch reads KQLLRFITCG…LETVYIGSDR (218 aa). The interval 31–38 is G1; it reads GSVDDGKS. 31-38 is a binding site for GTP; sequence GSVDDGKS. The segment at 89-93 is G2; sequence GITID. Positions 110–113 are G3; the sequence is DTPG. Residues 110-114 and 165-168 contribute to the GTP site; these read DTPGH and NKMD. The interval 165–168 is G4; sequence NKMD. A G5 region spans residues 204–206; sequence SAL. An adenylyl-sulfate kinase region spans residues 473 to 614; sequence KPATVLLTGL…FPGVTAKYDV (142 aa). 481 to 488 serves as a coordination point for ATP; that stretch reads GLTGSGKT.

The protein in the C-terminal section; belongs to the APS kinase family. It in the N-terminal section; belongs to the TRAFAC class translation factor GTPase superfamily. Classic translation factor GTPase family. CysN/NodQ subfamily. In terms of assembly, heterodimer composed of CysD, the smaller subunit, and CysNC.

The enzyme catalyses sulfate + ATP + H(+) = adenosine 5'-phosphosulfate + diphosphate. It catalyses the reaction adenosine 5'-phosphosulfate + ATP = 3'-phosphoadenylyl sulfate + ADP + H(+). Its pathway is sulfur metabolism; hydrogen sulfide biosynthesis; sulfite from sulfate: step 1/3. It participates in sulfur metabolism; hydrogen sulfide biosynthesis; sulfite from sulfate: step 2/3. In terms of biological role, with CysD forms the ATP sulfurylase (ATPS) that catalyzes the adenylation of sulfate producing adenosine 5'-phosphosulfate (APS) and diphosphate, the first enzymatic step in sulfur assimilation pathway. APS synthesis involves the formation of a high-energy phosphoric-sulfuric acid anhydride bond driven by GTP hydrolysis by CysN coupled to ATP hydrolysis by CysD. Its function is as follows. APS kinase catalyzes the synthesis of activated sulfate. In Rhodopirellula baltica (strain DSM 10527 / NCIMB 13988 / SH1), this protein is Bifunctional enzyme CysN/CysC (cysNC).